Consider the following 446-residue polypeptide: Glycine--tRNA ligase (446 aa).

Residues arginine 100 and glutamate 158 each coordinate substrate. Residues 190–192, 200–205, 275–276, and 319–322 each bind ATP; these read RNE, FRTREF, EL, and GIER. Residue 205–209 coordinates substrate; that stretch reads FEQFE. 315–319 is a binding site for substrate; it reads EPAVG.

This sequence belongs to the class-II aminoacyl-tRNA synthetase family. As to quaternary structure, homodimer.

The protein resides in the cytoplasm. It carries out the reaction tRNA(Gly) + glycine + ATP = glycyl-tRNA(Gly) + AMP + diphosphate. In terms of biological role, catalyzes the attachment of glycine to tRNA(Gly). The sequence is that of Glycine--tRNA ligase from Mycoplasma genitalium (strain ATCC 33530 / DSM 19775 / NCTC 10195 / G37) (Mycoplasmoides genitalium).